Consider the following 259-residue polypeptide: Small ribosomal subunit protein uS2 (259 aa).

The protein belongs to the universal ribosomal protein uS2 family.

In Streptococcus pneumoniae serotype 4 (strain ATCC BAA-334 / TIGR4), this protein is Small ribosomal subunit protein uS2.